The primary structure comprises 291 residues: UPF0173 metal-dependent hydrolase Rmet_5695 (291 aa).

This sequence belongs to the UPF0173 family.

The chain is UPF0173 metal-dependent hydrolase Rmet_5695 from Cupriavidus metallidurans (strain ATCC 43123 / DSM 2839 / NBRC 102507 / CH34) (Ralstonia metallidurans).